The primary structure comprises 647 residues: Zinc transporter ZIP4 (647 aa).

The N-terminal stretch at 1 to 22 (MASLVSLELGLLLAVLVVTATA) is a signal peptide. Over 23–327 (SPPAGLLSLL…QDQLSQSERY (305 aa)) the chain is Extracellular. Cystine bridges form between Cys-57–Cys-62, Cys-65–Cys-111, and Cys-160–Cys-195. Positions 236 to 255 (EAHSDHSHRHRGASSRDPVP) are disordered. Residue Asn-261 is glycosylated (N-linked (GlcNAc...) asparagine). A disulfide bond links Cys-270 and Cys-309. Residues 328–348 (LYGSLATLLICLCAVFGLLLL) traverse the membrane as a helical segment. The Cytoplasmic portion of the chain corresponds to 349–359 (TCTGCRGVTHY). A helical transmembrane segment spans residues 360-380 (ILQTFLSLAVGAVTGDAVLHL). The Extracellular segment spans residues 381-402 (TPKVLGLHTHSEEGLSPQPTWR). The helical transmembrane segment at 403 to 423 (LLAMLAGLYAFFLFENLFNLL) threads the bilayer. Over 424-498 (LPRDPEDLED…LSPELRLLPY (75 aa)) the chain is Cytoplasmic. Residues 452 to 454 (LQL) carry the Essential for SLC39A4 endocytosis motif. The disordered stretch occupies residues 458-484 (ELRQPKPPHEGSRADLVAEESPELLNP). The segment covering 460–470 (RQPKPPHEGSR) has biased composition (basic and acidic residues). Residues 499–518 (MITLGDAVHNFADGLAVGAA) traverse the membrane as a helical segment. His-507, Asn-508, and Asp-511 together coordinate Zn(2+). Topologically, residues 519 to 526 (FASSWKTG) are extracellular. The helical transmembrane segment at 527–553 (LATSLAVFCHELPHELGDFAALLHAGL) threads the bilayer. Residues His-536, Glu-537, and His-540 each coordinate Zn(2+). Topologically, residues 554–558 (SVRQA) are cytoplasmic. A helical transmembrane segment spans residues 559–579 (LLLNLASALTAFAGLYVALAV). Topologically, residues 580-586 (GVSEESE) are extracellular. Residues 587–607 (AWILAVATGLFLYVALCDMLP) form a helical membrane-spanning segment. Residues 608–617 (AMLKVRDPRP) lie on the Cytoplasmic side of the membrane. Residues 618 to 638 (WLLFLLHNVGLLGGWTVLLLL) form a helical membrane-spanning segment. At 639–647 (SLYEDDITF) the chain is on the extracellular side.

It belongs to the ZIP transporter (TC 2.A.5) family. Homodimer; homodimerization is mediated by the transmembrane domain. In terms of processing, the extracellular N-terminal ectodomain is cleaved when cells are Zn(2+) deficient, N-terminally cleaved SLC39A4 is internalized at a faster rate. Post-translationally, under excess Zn(2+) conditions, SLC39A4 on the cell surface is rapidly endocytosed, ubiquitinated and degraded. Glycosylated. As to expression, highly expressed in kidney, small intestine, stomach, colon, jejunum and duodenum.

The protein resides in the cell membrane. The protein localises to the recycling endosome membrane. It localises to the apical cell membrane. The enzyme catalyses Zn(2+)(in) = Zn(2+)(out). The Zn(2+) uniporter activity is regulated by zinc availability. Extracellular acidification stimulated SLC39A4-dependent Zn(2+) uptake. Functionally, selective transporter that mediates the uptake of Zn(2+). Plays an essential role for dietary zinc uptake from small intestine. The Zn(2+) uniporter activity is regulated by zinc availability. Also exhibits polyspecific binding and transport of Cu(2+), Cd(2+) and possibly Ni(2+) but at higher concentrations. This Homo sapiens (Human) protein is Zinc transporter ZIP4.